We begin with the raw amino-acid sequence, 593 residues long: Acetyl-coenzyme A transferase nodX (593 aa).

Residues Asp-572–Asp-593 form a disordered region. A compositionally biased stretch (gly residues) spans Phe-580 to Asp-593.

Belongs to the CoA-transferase III family.

It functions in the pathway secondary metabolite biosynthesis. Its function is as follows. Acetyl-coenzyme A transferase; part of the gene cluster that mediates the biosynthesis of the indole diterpenes nodulisporic acids (NA). Nodulisporic acid A (NAA) and its chemically modified derivatives are of particular significance because of their highly potent insecticidal activity against blood-feeding arthropods and lack of observable adverse effects on mammals, in particular the tremogenicity associated with the paspaline-derived IDTs is not observed. The geranylgeranyl diphosphate (GGPP) synthase ggs1, localized outside of the cluster, is proposed to catalyze the first step in nodulisporic acid biosynthesis via conversion of farnesyl pyrophosphate and isopentyl pyrophosphate into geranylgeranyl pyrophosphate (GGPP). Condensation of indole-3-glycerol phosphate with GGPP by the prenyl transferase nodC then forms 3-geranylgeranylindole (3-GGI). Epoxidation by the FAD-dependent monooxygenase nodM leads to a single-epoxidized-GGI that is substrate of the terpene cyclase nodB for cyclization to yield emindole SB. The terminal methyl carbon, C28, of emindole SB is then oxidized by the cytochrome P450 monooxygenase nodW to produce nodulisporic acid F (NAF), the pentacyclic core of NAA. NAF is converted to nodulisporic acid E (NAE) via prenylation. This step is probably performed by one of the indole diterpene prenyltransferases nodD1 or nodD2. Several oxidation steps performed by the FAD-linked oxidoreductase nodO and one of the cytochrome P450 monooxygenase nodR, nodX or nodZ further convert NAE to nodulisporic acid D (NAD). NAD is substrate of cytochrome P450 monooxygenase nodJ to produce the precursor of nodulisporic acid C (NAC), converted to NAC by one of the indole diterpene prenyltransferases nodD1 or nodD2. The FAD-dependent monooxygenase nodY2 then oxidizes NAC to nodulisporic acid B (NAB). Finally NAB is converted to NAA by one of the cytochrome P450 monooxygenases nodR, nodX or nodZ. In Hypoxylon pulicicidum, this protein is Acetyl-coenzyme A transferase nodX.